The chain runs to 347 residues: MNFENKEIKLETKKTILFKNIVELYLRTGKPIGSKFLVEQDYGLGKSSATIRNMMHEFEEIGLLEKSHISSGRIPSTLGLKYYVKYLANSEDSDLKKQLKKLFFQRKLTIDETIELAAKSISEIVGLTMVTSTENSFETLKSIQLVLLDKNESIIIIVLSSGKVISKKLAMKDSIVLDDLRIAVRIFKERLIDTKVSELHEKTLALKPILKISIQNYEDILQEFIINIFDFEVSQTNNVYGKKNIILARDIKREDLTKIIKLIESTSIWQTIEDNLEEEENIKIEIRPDNSSFLSKKISIDNKIREISVVGSKKMDYAKAKSALMLIEDLVEENKKKEKGNNEDNEE.

Belongs to the HrcA family.

Functionally, negative regulator of class I heat shock genes (grpE-dnaK-dnaJ and groELS operons). Prevents heat-shock induction of these operons. The protein is Heat-inducible transcription repressor HrcA of Mycoplasmopsis pulmonis (strain UAB CTIP) (Mycoplasma pulmonis).